The sequence spans 303 residues: tRNA pseudouridine synthase B (303 aa).

Residue Asp-47 is the Nucleophile of the active site.

This sequence belongs to the pseudouridine synthase TruB family. Type 1 subfamily.

The catalysed reaction is uridine(55) in tRNA = pseudouridine(55) in tRNA. In terms of biological role, responsible for synthesis of pseudouridine from uracil-55 in the psi GC loop of transfer RNAs. This Ruegeria pomeroyi (strain ATCC 700808 / DSM 15171 / DSS-3) (Silicibacter pomeroyi) protein is tRNA pseudouridine synthase B.